Here is a 273-residue protein sequence, read N- to C-terminus: NH(3)-dependent NAD(+) synthetase (273 aa).

47-54 contributes to the ATP binding site; sequence GISGGQDS. Asp53 contacts Mg(2+). Residue Arg139 participates in deamido-NAD(+) binding. Position 159 (Thr159) interacts with ATP. Glu164 lines the Mg(2+) pocket. Residues Lys172 and Asp179 each coordinate deamido-NAD(+). 2 residues coordinate ATP: Lys188 and Thr210. Residue 259-260 participates in deamido-NAD(+) binding; it reads HK.

Belongs to the NAD synthetase family. As to quaternary structure, homodimer.

It catalyses the reaction deamido-NAD(+) + NH4(+) + ATP = AMP + diphosphate + NAD(+) + H(+). The protein operates within cofactor biosynthesis; NAD(+) biosynthesis; NAD(+) from deamido-NAD(+) (ammonia route): step 1/1. In terms of biological role, catalyzes the ATP-dependent amidation of deamido-NAD to form NAD. Uses ammonia as a nitrogen source. The chain is NH(3)-dependent NAD(+) synthetase from Staphylococcus haemolyticus (strain JCSC1435).